Reading from the N-terminus, the 368-residue chain is Chaperone protein DnaJ (368 aa).

Positions 5–65 constitute a J domain; sequence DYYEVLGLTK…QKKARYDQFG (61 aa). The segment at 125-207 adopts a CR-type zinc-finger fold; the sequence is GKETEIEIPK…CRGEGKVQKR (83 aa). C138, C141, C155, C158, C181, C184, C195, and C198 together coordinate Zn(2+). 4 CXXCXGXG motif repeats span residues 138-145, 155-162, 181-188, and 195-202; these read CETCHGSG, CSTCNGAG, CTTCHGTG, and CSTCRGEG.

This sequence belongs to the DnaJ family. As to quaternary structure, homodimer. Zn(2+) serves as cofactor.

The protein resides in the cytoplasm. In terms of biological role, participates actively in the response to hyperosmotic and heat shock by preventing the aggregation of stress-denatured proteins and by disaggregating proteins, also in an autonomous, DnaK-independent fashion. Unfolded proteins bind initially to DnaJ; upon interaction with the DnaJ-bound protein, DnaK hydrolyzes its bound ATP, resulting in the formation of a stable complex. GrpE releases ADP from DnaK; ATP binding to DnaK triggers the release of the substrate protein, thus completing the reaction cycle. Several rounds of ATP-dependent interactions between DnaJ, DnaK and GrpE are required for fully efficient folding. Also involved, together with DnaK and GrpE, in the DNA replication of plasmids through activation of initiation proteins. In Lysinibacillus sphaericus (Bacillus sphaericus), this protein is Chaperone protein DnaJ.